The chain runs to 816 residues: Leucine--tRNA ligase (816 aa).

Residues 46-56 (PYPSGALHMGH) carry the 'HIGH' region motif. A 'KMSKS' region motif is present at residues 638–642 (KMSKS). Residue lysine 641 coordinates ATP.

The protein belongs to the class-I aminoacyl-tRNA synthetase family.

Its subcellular location is the cytoplasm. The enzyme catalyses tRNA(Leu) + L-leucine + ATP = L-leucyl-tRNA(Leu) + AMP + diphosphate. The protein is Leucine--tRNA ligase of Xanthomonas campestris pv. campestris (strain ATCC 33913 / DSM 3586 / NCPPB 528 / LMG 568 / P 25).